The sequence spans 132 residues: Small ribosomal subunit protein uS11 (132 aa).

Residues isoleucine 110–leucine 132 are disordered. Over residues arginine 123–leucine 132 the composition is skewed to basic residues.

Belongs to the universal ribosomal protein uS11 family. As to quaternary structure, component of the small ribosomal subunit. Mature ribosomes consist of a small (40S) and a large (60S) subunit. The 40S subunit contains about 32 different proteins and 1 molecule of RNA (18S). The 60S subunit contains 45 different proteins and 3 molecules of RNA (25S, 5.8S and 5S).

It is found in the cytoplasm. In terms of biological role, component of the ribosome, a large ribonucleoprotein complex responsible for the synthesis of proteins in the cell. The small ribosomal subunit (SSU) binds messenger RNAs (mRNAs) and translates the encoded message by selecting cognate aminoacyl-transfer RNA (tRNA) molecules. The large subunit (LSU) contains the ribosomal catalytic site termed the peptidyl transferase center (PTC), which catalyzes the formation of peptide bonds, thereby polymerizing the amino acids delivered by tRNAs into a polypeptide chain. The nascent polypeptides leave the ribosome through a tunnel in the LSU and interact with protein factors that function in enzymatic processing, targeting, and the membrane insertion of nascent chains at the exit of the ribosomal tunnel. RPS14B is involved in nucleolar processing of pre-18S ribosomal RNA and ribosome assembly. This is Small ribosomal subunit protein uS11 (RPS14B) from Candida albicans (strain SC5314 / ATCC MYA-2876) (Yeast).